The chain runs to 222 residues: MAIIMTESSYERRVKALYEKQIHMEALEAKFIKKVFKFNSNLLDVKEAASRHQRKVGKLQKVLMERREELDKRVSFIEELDRELEATKLHNLAMKDWFKQQKMLAKQRKNEIMESIHTLSKTTRTYINQEALPARVKGVTVLRGDKRDQLIPFDLKATDVEGLDSLCQHLESLNVDVAQWQQLISLAMDMAMESRAPTTPPKEADNCKSIIEIDLTSPMSHT.

The stretch at arginine 51–alanine 86 forms a coiled coil.

Belongs to the SPC25 family. As to quaternary structure, component of the Ndc80 complex, which is composed of Ndc80, Nuf2 and Spc25.

The protein localises to the nucleus. It is found in the chromosome. Its subcellular location is the centromere. The protein resides in the kinetochore. Its function is as follows. Acts as a component of the essential kinetochore-associated Ndc80 complex, which is required for chromosome segregation and spindle checkpoint activity during meiosis and mitosis. Required for kinetochore integrity and the organization of stable microtubule binding sites in the outer plate of the kinetochore. Participates in SAC signaling that responds specifically to disruptions in spindle microtubule dynamics. The NDC80 complex synergistically enhances the affinity of the SKA1 complex for microtubules and may allow the NDC80 complex to track depolymerizing microtubules. This is Kinetochore protein Spc25 from Drosophila melanogaster (Fruit fly).